The following is a 117-amino-acid chain: UPF0122 protein Teth39_1278 (117 aa).

This sequence belongs to the UPF0122 family.

Its function is as follows. Might take part in the signal recognition particle (SRP) pathway. This is inferred from the conservation of its genetic proximity to ftsY/ffh. May be a regulatory protein. In Thermoanaerobacter pseudethanolicus (strain ATCC 33223 / 39E) (Clostridium thermohydrosulfuricum), this protein is UPF0122 protein Teth39_1278.